Consider the following 276-residue polypeptide: Large ribosomal subunit protein uL2c (276 aa).

A disordered region spans residues 225–256 (NPVDHPHGGGEGRSPIGRPKPVSPWGKTALGA).

It belongs to the universal ribosomal protein uL2 family. Part of the 50S ribosomal subunit.

It is found in the plastid. The protein localises to the chloroplast. This chain is Large ribosomal subunit protein uL2c (rpl2), found in Mesostigma viride (Green alga).